A 493-amino-acid chain; its full sequence is Glutamyl-tRNA(Gln) amidotransferase subunit A (493 aa).

Residues K79 and S159 each act as charge relay system in the active site. The Acyl-ester intermediate role is filled by S183.

The protein belongs to the amidase family. GatA subfamily. As to quaternary structure, heterotrimer of A, B and C subunits.

It catalyses the reaction L-glutamyl-tRNA(Gln) + L-glutamine + ATP + H2O = L-glutaminyl-tRNA(Gln) + L-glutamate + ADP + phosphate + H(+). Allows the formation of correctly charged Gln-tRNA(Gln) through the transamidation of misacylated Glu-tRNA(Gln) in organisms which lack glutaminyl-tRNA synthetase. The reaction takes place in the presence of glutamine and ATP through an activated gamma-phospho-Glu-tRNA(Gln). In Brucella melitensis biotype 2 (strain ATCC 23457), this protein is Glutamyl-tRNA(Gln) amidotransferase subunit A.